Reading from the N-terminus, the 240-residue chain is MATLFIADLHLCAEEPAITAGFLRFLAREARKADALYILGDLFEAWIGDDDPNPLHRQMAAAIKAVSDSGVPCYFIHGNRDFLLGKRFARESGMTLLPEEKVLELYGRRVLIMHGDTLCTDDIGYQAFRAKVHKPWLQTLFLALPLFVRKRIAARMRANSKEANSSKSLAIMDVNQNAVVSAMEKHQVQWLIHGHTHRPAVHELIANQQPAFRVVLGAWHTEGSMVKVTADDVELIHFPF.

The Mn(2+) site is built by D8, H10, D41, N79, and H114. 79 to 80 contacts substrate; it reads NR. Positions 122, 160, 164, 167, and 195 each coordinate substrate. Mn(2+) contacts are provided by H195 and H197.

It belongs to the LpxH family. It depends on Mn(2+) as a cofactor.

Its subcellular location is the cell inner membrane. It catalyses the reaction UDP-2-N,3-O-bis[(3R)-3-hydroxytetradecanoyl]-alpha-D-glucosamine + H2O = 2-N,3-O-bis[(3R)-3-hydroxytetradecanoyl]-alpha-D-glucosaminyl 1-phosphate + UMP + 2 H(+). It participates in glycolipid biosynthesis; lipid IV(A) biosynthesis; lipid IV(A) from (3R)-3-hydroxytetradecanoyl-[acyl-carrier-protein] and UDP-N-acetyl-alpha-D-glucosamine: step 4/6. Hydrolyzes the pyrophosphate bond of UDP-2,3-diacylglucosamine to yield 2,3-diacylglucosamine 1-phosphate (lipid X) and UMP by catalyzing the attack of water at the alpha-P atom. Involved in the biosynthesis of lipid A, a phosphorylated glycolipid that anchors the lipopolysaccharide to the outer membrane of the cell. In Escherichia coli O7:K1 (strain IAI39 / ExPEC), this protein is UDP-2,3-diacylglucosamine hydrolase.